Consider the following 102-residue polypeptide: NADH-quinone oxidoreductase subunit K (102 aa).

3 consecutive transmembrane segments (helical) span residues 5-25 (ITHY…GIFL), 31-51 (IIIL…FVAF), and 66-86 (FILT…VVFF).

Belongs to the complex I subunit 4L family. NDH-1 is composed of 14 different subunits. Subunits NuoA, H, J, K, L, M, N constitute the membrane sector of the complex.

The protein localises to the cell inner membrane. The catalysed reaction is a quinone + NADH + 5 H(+)(in) = a quinol + NAD(+) + 4 H(+)(out). In terms of biological role, NDH-1 shuttles electrons from NADH, via FMN and iron-sulfur (Fe-S) centers, to quinones in the respiratory chain. The immediate electron acceptor for the enzyme in this species is believed to be ubiquinone. Couples the redox reaction to proton translocation (for every two electrons transferred, four hydrogen ions are translocated across the cytoplasmic membrane), and thus conserves the redox energy in a proton gradient. This Bartonella quintana (strain Toulouse) (Rochalimaea quintana) protein is NADH-quinone oxidoreductase subunit K.